A 515-amino-acid chain; its full sequence is Anthranilate synthase component 1 (515 aa).

Residues S50 and 281-283 (PYM) each bind L-tryptophan. 316–317 (GT) is a binding site for chorismate. Mg(2+) is bound at residue E343. Residues Y431, R451, 465–467 (GAG), and G467 contribute to the chorismate site. E480 is a binding site for Mg(2+).

It belongs to the anthranilate synthase component I family. As to quaternary structure, heterotetramer consisting of two non-identical subunits: a beta subunit (TrpG) and a large alpha subunit (TrpE). It depends on Mg(2+) as a cofactor.

The catalysed reaction is chorismate + L-glutamine = anthranilate + pyruvate + L-glutamate + H(+). It participates in amino-acid biosynthesis; L-tryptophan biosynthesis; L-tryptophan from chorismate: step 1/5. Its activity is regulated as follows. Feedback inhibited by tryptophan. Functionally, part of a heterotetrameric complex that catalyzes the two-step biosynthesis of anthranilate, an intermediate in the biosynthesis of L-tryptophan. In the first step, the glutamine-binding beta subunit (TrpG) of anthranilate synthase (AS) provides the glutamine amidotransferase activity which generates ammonia as a substrate that, along with chorismate, is used in the second step, catalyzed by the large alpha subunit of AS (TrpE) to produce anthranilate. In the absence of TrpG, TrpE can synthesize anthranilate directly from chorismate and high concentrations of ammonia. The chain is Anthranilate synthase component 1 (trpE) from Bacillus subtilis (strain 168).